The primary structure comprises 198 residues: Pyridoxal 5'-phosphate synthase subunit PdxT (198 aa).

An L-glutamine-binding site is contributed by 52 to 54 (GES). C84 (nucleophile) is an active-site residue. L-glutamine contacts are provided by residues R115 and 142–143 (IR). Catalysis depends on charge relay system residues H178 and E180.

This sequence belongs to the glutaminase PdxT/SNO family. In the presence of PdxS, forms a dodecamer of heterodimers. Only shows activity in the heterodimer.

It carries out the reaction aldehydo-D-ribose 5-phosphate + D-glyceraldehyde 3-phosphate + L-glutamine = pyridoxal 5'-phosphate + L-glutamate + phosphate + 3 H2O + H(+). The catalysed reaction is L-glutamine + H2O = L-glutamate + NH4(+). The protein operates within cofactor biosynthesis; pyridoxal 5'-phosphate biosynthesis. Functionally, catalyzes the hydrolysis of glutamine to glutamate and ammonia as part of the biosynthesis of pyridoxal 5'-phosphate. The resulting ammonia molecule is channeled to the active site of PdxS. In Archaeoglobus fulgidus (strain ATCC 49558 / DSM 4304 / JCM 9628 / NBRC 100126 / VC-16), this protein is Pyridoxal 5'-phosphate synthase subunit PdxT.